The chain runs to 275 residues: Diaminopimelate epimerase (275 aa).

Substrate contacts are provided by Asn-12, Gln-45, and Asn-65. Residue Cys-74 is the Proton donor of the active site. Residues 75–76 (GN), Asn-158, Asn-191, and 209–210 (ER) contribute to the substrate site. Cys-218 acts as the Proton acceptor in catalysis. Residue 219-220 (GT) coordinates substrate.

This sequence belongs to the diaminopimelate epimerase family. Homodimer.

It localises to the cytoplasm. The enzyme catalyses (2S,6S)-2,6-diaminopimelate = meso-2,6-diaminopimelate. It participates in amino-acid biosynthesis; L-lysine biosynthesis via DAP pathway; DL-2,6-diaminopimelate from LL-2,6-diaminopimelate: step 1/1. In terms of biological role, catalyzes the stereoinversion of LL-2,6-diaminopimelate (L,L-DAP) to meso-diaminopimelate (meso-DAP), a precursor of L-lysine and an essential component of the bacterial peptidoglycan. The sequence is that of Diaminopimelate epimerase from Shewanella putrefaciens (strain CN-32 / ATCC BAA-453).